Reading from the N-terminus, the 130-residue chain is MSATQNYGTGRRKTATARVFLRPGTGNISINNRSLDTFFGRETARMVVRQPLELTETTEKFDIYVTVIGGGVSGQAGAIRHGITRALIEYDETLRSPLRKAGYVTRDAREVERKKVGLRKARKRPQYSKR.

This sequence belongs to the universal ribosomal protein uS9 family.

This is Small ribosomal subunit protein uS9 from Ectopseudomonas mendocina (strain ymp) (Pseudomonas mendocina).